Here is a 314-residue protein sequence, read N- to C-terminus: Short chain dehydrogenase atnD (314 aa).

NADP(+) contacts are provided by leucine 41, lysine 66, aspartate 90, and asparagine 116. Catalysis depends on proton donor residues serine 171 and tyrosine 204. NADP(+) contacts are provided by tyrosine 204 and lysine 208. Lysine 208 functions as the Lowers pKa of active site Tyr in the catalytic mechanism.

This sequence belongs to the short-chain dehydrogenases/reductases (SDR) family.

The protein operates within secondary metabolite biosynthesis. Its function is as follows. Short chain dehydrogenase; part of the gene cluster that mediates the biosynthesis of aspercryptins, linear lipopeptides built from six amino acids including 2 highly unusual and nonproteogenic amino acids, 2-amino-octanoic acid (2aoa) and 2-amino-dodecanol (2adol). The core structure of aspercryptins is as follows: Ser/Ala-Thr-Ile/Val-2aoa-Asn-2adol. The first step of aspercryptin biosynthesis is the generation of the fatty acid precursors, octanoic and dodecanoic acids, by the FAS subunits atnF and atnM. The fatty acid precursors are likely transformed into the corresponding alpha-amino fatty acids in three steps. First, they are hydroxylated by the cytochrome P450 monooxygenase atnE, then oxidized to the corresponding alpha-keto acids by the NAD(P)-dependent oxidoreductase atnD, and finally converted to the alpha-amino fatty acids by the PLP-dependent aminotransferases atnH or atnJ. the alpha-amino fatty acids, 2-amino-octanoic and 2-amino-dodecanoic acids, are recognized, activated, and covalently tethered to the NRPS atnA by its fourth and sixth adenylation domains. The second module of atnA is the Thr module and contains an epimerase (E) domain responsible for the epimerization of Thr to D-allo-Thr. Additionally, despite atnA having only one epimerase domain, the first amino acid of aspercryptin A1 is D-Ser, suggesting that serine is either loaded directly as D-Ser on the first module or that the epimerase domain in the threonine module epimerizes both L-Ser and L-Thr. After condensation of the hexapeptide of aspercryptin, the C-terminal reductase (TE) domain might be involved in the reductive release and production of the aldehyde hexapeptide. Further reduction would generate aspercryptins. The variety of aspercryptins produced reflects the flexibility of the atnA NRPS, allowing incorporation of alanine instead of serine, valine for isoleucine, and a C10 fatty amino alcohol instead of the C12 version. AtnB seems to be involved in the selectivity for Ile versus Val by the third module. Moreover, type B, C and D aspercryptins have an additional N-terminal cichorine, acetyl and propionyl group respectively. This Emericella nidulans (strain FGSC A4 / ATCC 38163 / CBS 112.46 / NRRL 194 / M139) (Aspergillus nidulans) protein is Short chain dehydrogenase atnD.